The primary structure comprises 62 residues: Large ribosomal subunit protein bL28 (62 aa).

The protein belongs to the bacterial ribosomal protein bL28 family.

The chain is Large ribosomal subunit protein bL28 from Koribacter versatilis (strain Ellin345).